We begin with the raw amino-acid sequence, 271 residues long: Probable protein VP2 (271 aa).

Disordered stretches follow at residues 49-103 (GGPP…DAAA), 124-146 (QCSN…PIDT), and 203-271 (LQQR…RVST). Pro residues predominate over residues 50–61 (GPPPPGGPPPGT). The segment covering 87-99 (GEGGAAGPPGAGG) has biased composition (gly residues). A compositionally biased stretch (basic and acidic residues) spans 207-216 (QQRESSESPK). Over residues 217–238 (KAHIQRKKGRKPLQKSRRRRRQ) the composition is skewed to basic residues. A compositionally biased stretch (low complexity) spans 239–259 (YSSSSDDSESSGSSSSSSNSS).

Post-translationally, phosphorylated at C-terminal serines.

This is Probable protein VP2 from Torque teno virus (isolate Human/Japan/SANBAN/1999) (TTV).